Consider the following 271-residue polypeptide: Uridine-cytidine kinase 1-B (271 aa).

24–32 (GGTASGKST) is a binding site for ATP. Substrate contacts are provided by Asp81, Tyr109, His114, Arg163, Arg172, and Gln180. ATP is bound at residue Asp209. The disordered stretch occupies residues 240–271 (RSQKRTLPGQGDSGGLLLQGKRTHLESSSRPH). The segment covering 246-259 (LPGQGDSGGLLLQG) has biased composition (low complexity). The segment covering 262 to 271 (THLESSSRPH) has biased composition (basic and acidic residues).

Belongs to the uridine kinase family.

It catalyses the reaction uridine + ATP = UMP + ADP + H(+). The catalysed reaction is cytidine + ATP = CMP + ADP + H(+). It functions in the pathway pyrimidine metabolism; CTP biosynthesis via salvage pathway; CTP from cytidine: step 1/3. The protein operates within pyrimidine metabolism; UMP biosynthesis via salvage pathway; UMP from uridine: step 1/1. Its function is as follows. Phosphorylates uridine and cytidine to uridine monophosphate and cytidine monophosphate. Does not phosphorylate deoxyribonucleosides or purine ribonucleosides. Can use ATP or GTP as a phosphate donor. This chain is Uridine-cytidine kinase 1-B (uck1-b), found in Xenopus laevis (African clawed frog).